Reading from the N-terminus, the 127-residue chain is Small ribosomal subunit protein uS11 (127 aa).

This sequence belongs to the universal ribosomal protein uS11 family. As to quaternary structure, part of the 30S ribosomal subunit. Interacts with proteins S7 and S18. Binds to IF-3.

Functionally, located on the platform of the 30S subunit, it bridges several disparate RNA helices of the 16S rRNA. Forms part of the Shine-Dalgarno cleft in the 70S ribosome. The protein is Small ribosomal subunit protein uS11 of Chlorobaculum tepidum (strain ATCC 49652 / DSM 12025 / NBRC 103806 / TLS) (Chlorobium tepidum).